Here is a 302-residue protein sequence, read N- to C-terminus: Ribose-5-phosphate isomerase (302 aa).

The protein belongs to the ribose 5-phosphate isomerase family.

The protein localises to the cytoplasm. It catalyses the reaction aldehydo-D-ribose 5-phosphate = D-ribulose 5-phosphate. Its pathway is carbohydrate degradation; pentose phosphate pathway; D-ribose 5-phosphate from D-ribulose 5-phosphate (non-oxidative stage): step 1/1. The sequence is that of Ribose-5-phosphate isomerase (RKI1) from Cryptococcus neoformans var. neoformans serotype D (strain B-3501A) (Filobasidiella neoformans).